Reading from the N-terminus, the 839-residue chain is Probable beta-glucosidase I (839 aa).

Asn197 is a glycosylation site (N-linked (GlcNAc...) asparagine). Asp225 is an active-site residue. The region spanning 396-556 (DGKTGFKFRV…TQEELISKAV (161 aa)) is the PA14 domain. A glycan (N-linked (GlcNAc...) asparagine) is linked at Asn494.

It belongs to the glycosyl hydrolase 3 family.

The protein localises to the secreted. The catalysed reaction is Hydrolysis of terminal, non-reducing beta-D-glucosyl residues with release of beta-D-glucose.. Its pathway is glycan metabolism; cellulose degradation. Functionally, beta-glucosidases are one of a number of cellulolytic enzymes, and catalyze the last step releasing glucose from the inhibitory cellobiose. This is Probable beta-glucosidase I (bglI) from Emericella nidulans (strain FGSC A4 / ATCC 38163 / CBS 112.46 / NRRL 194 / M139) (Aspergillus nidulans).